A 728-amino-acid chain; its full sequence is MSDRIDRDVINALIAGHFADPFSVLGMHKTTAGLEVRALLPDATDVWVIEPKTGRKLAKLECLDSRGFFSGVIPRRKNFFRYQLAVVWHGQQNLIDDPYRFGPLIQEMDAWLLSEGTHLRPYETLGAHADTMDGVTGTRFSVWAPNARRVSVVGQFNYWDGRRHPMRLRKESGIWELFIPGAHNGQLYKYEMIDANGNLRLKSDPYAFEAQMRPETASLICGLPEKVVQTEERKKANQFDAPISIYEVHLGSWRRHTDNNFWLSYRELADQLVPYAKWMGFTHLELLPINEHPFDGSWGYQPTGLYAPTRRFGTRDDFRYFIDAAHAAGLNVILDWVPGHFPTDDFALAEFDGTNLYEHSDPREGYHQDWNTLIYNYGRREVSNFLVGNALYWIERFGIDALRVDAVASMIYRDYSRKEGEWIPNEFGGRENLEAIEFLRNTNRILGEQVSGAVTMAEESTDFPGVSRPQDMGGLGFWYKWNLGWMHDTLDYMKLDPIYRQYHHDKLTFGMLYNYTENFVLPLSHDEVVHGKKSILDRMPGDAWQKFANLRAYYGWMWAFPGKKLLFMGNEFAQGREWNHDASLDWHLLEGGDNWHHGVQRLVRDLNHTYRHHKAMHELDFDPYGFEWLVVDDKERSVLIFVRRDKEGNEIIVASNFTPVPRHDYRFGINQPGKWREILNTDSMHYHGSNAGNGGAVHSDEIASHGRQHSLSLTLPPLATIWLVREAE.

Asp405 functions as the Nucleophile in the catalytic mechanism. The active-site Proton donor is Glu458.

The protein belongs to the glycosyl hydrolase 13 family. GlgB subfamily. Monomer.

It catalyses the reaction Transfers a segment of a (1-&gt;4)-alpha-D-glucan chain to a primary hydroxy group in a similar glucan chain.. It functions in the pathway glycan biosynthesis; glycogen biosynthesis. Functionally, catalyzes the formation of the alpha-1,6-glucosidic linkages in glycogen by scission of a 1,4-alpha-linked oligosaccharide from growing alpha-1,4-glucan chains and the subsequent attachment of the oligosaccharide to the alpha-1,6 position. The sequence is that of 1,4-alpha-glucan branching enzyme GlgB from Escherichia coli O1:K1 / APEC.